The following is a 100-amino-acid chain: Signal recognition particle 19 kDa protein (100 aa).

This sequence belongs to the SRP19 family. Part of the signal recognition particle protein translocation system, which is composed of SRP and FtsY. Archaeal SRP consists of a 7S RNA molecule of 300 nucleotides and two protein subunits: SRP54 and SRP19.

The protein localises to the cytoplasm. Functionally, involved in targeting and insertion of nascent membrane proteins into the cytoplasmic membrane. Binds directly to 7S RNA and mediates binding of the 54 kDa subunit of the SRP. This chain is Signal recognition particle 19 kDa protein, found in Caldivirga maquilingensis (strain ATCC 700844 / DSM 13496 / JCM 10307 / IC-167).